The chain runs to 144 residues: Transcriptional regulator MraZ (144 aa).

SpoVT-AbrB domains lie at threonine 5–glutamate 47 and threonine 77–alanine 120.

Belongs to the MraZ family. As to quaternary structure, forms oligomers.

The protein localises to the cytoplasm. It localises to the nucleoid. This chain is Transcriptional regulator MraZ, found in Mycolicibacterium vanbaalenii (strain DSM 7251 / JCM 13017 / BCRC 16820 / KCTC 9966 / NRRL B-24157 / PYR-1) (Mycobacterium vanbaalenii).